A 110-amino-acid polypeptide reads, in one-letter code: Late cornified envelope protein 2C (110 aa).

Positions Met1–Cys10 are enriched in low complexity. The interval Met1 to Lys23 is disordered. Residues Gln11–Lys23 are compositionally biased toward pro residues.

It belongs to the LCE family. As to quaternary structure, interacts with CYSRT1; the interaction is direct. Skin-specific. Expression was readily detected in adult trunk skin, adult arm skin, fetal skin, penal skin, vulva, esophagus and tongue. Not expressed in the cervix, rectum, lung, colon, or placenta.

Precursors of the cornified envelope of the stratum. The sequence is that of Late cornified envelope protein 2C (LCE2C) from Homo sapiens (Human).